Consider the following 147-residue polypeptide: Hemoglobin subunit beta (147 aa).

At Val2 the chain carries N-acetylvaline. One can recognise a Globin domain in the interval 3–147; sequence HLTAEEKSAV…VANALAHKYH (145 aa). The residue at position 13 (Thr13) is a Phosphothreonine. Ser45 is modified (phosphoserine). An N6-acetyllysine modification is found at Lys60. Position 64 (His64) interacts with heme b. Lys83 is modified (N6-acetyllysine). His93 is a heme b binding site. Cys94 is subject to S-nitrosocysteine. The residue at position 145 (Lys145) is an N6-acetyllysine.

This sequence belongs to the globin family. As to quaternary structure, heterotetramer of two alpha chains and two beta chains. In terms of tissue distribution, red blood cells.

In terms of biological role, involved in oxygen transport from the lung to the various peripheral tissues. The protein is Hemoglobin subunit beta (HBB) of Sapajus apella (Brown-capped capuchin).